Here is a 147-residue protein sequence, read N- to C-terminus: Small ribosomal subunit protein eS19 (147 aa).

Belongs to the eukaryotic ribosomal protein eS19 family. Component of the small ribosomal subunit.

The protein localises to the cytoplasm. It is found in the nucleus. Its function is as follows. Component of the small ribosomal subunit. The ribosome is a large ribonucleoprotein complex responsible for the synthesis of proteins in the cell. Required for pre-rRNA processing and maturation of 40S ribosomal subunits. This is Small ribosomal subunit protein eS19 (rps19) from Gillichthys mirabilis (Long-jawed mudsucker).